We begin with the raw amino-acid sequence, 619 residues long: DNA polymerase II small subunit (619 aa).

The disordered stretch occupies residues Glu-78–Glu-122. Positions Glu-79–Glu-93 are enriched in basic and acidic residues.

Belongs to the DNA polymerase delta/II small subunit family. As to quaternary structure, heterodimer of a large subunit and a small subunit.

It catalyses the reaction DNA(n) + a 2'-deoxyribonucleoside 5'-triphosphate = DNA(n+1) + diphosphate. The catalysed reaction is Exonucleolytic cleavage in the 3'- to 5'-direction to yield nucleoside 5'-phosphates.. In terms of biological role, possesses two activities: a DNA synthesis (polymerase) and an exonucleolytic activity that degrades single-stranded DNA in the 3' to 5' direction. Has a template-primer preference which is characteristic of a replicative DNA polymerase. In Pyrococcus abyssi (strain GE5 / Orsay), this protein is DNA polymerase II small subunit (polB).